The primary structure comprises 748 residues: E3 ubiquitin-protein ligase SMURF2 (748 aa).

Residues M1–K119 enclose the C2 domain. K119 participates in a covalent cross-link: Glycyl lysine isopeptide (Lys-Gly) (interchain with G-Cter in ubiquitin). WW domains follow at residues N157–R190, P251–V284, and G297–L330. An HECT domain is found at R414 to E748. C716 (glycyl thioester intermediate) is an active-site residue.

Interacts (via WW domains) with SMAD1. Interacts (via WW domains) with SMAD2 (via PY-motif). Interacts (via WW domains) with SMAD3 (via PY-motif). Interacts with SMAD6. Interacts with SMAD7 (via PY-motif) and TGFBR1; SMAD7 recruits SMURF2 to the TGF-beta receptor and regulates its degradation. Does not interact with SMAD4; SMAD4 lacks a PY-motif. Interacts with AIMP1. Interacts with NDFIP1 and NDFIP2; this interaction activates the E3 ubiquitin-protein ligase. Interacts with TTC3. In terms of processing, auto-ubiquitinated and ubiquitinated in the presence of RNF11 and UBE2D1. Ubiquitinated by the SCF(FBXL15) complex and TTC3, leading to its degradation by the proteasome. 'Lys-48'-linked polyubiquitination mediated by TRAF4 at Lys-119 leads to SMURF2 proteasomal degradation.

Its subcellular location is the nucleus. The protein resides in the cytoplasm. It is found in the cell membrane. It localises to the membrane raft. The catalysed reaction is S-ubiquitinyl-[E2 ubiquitin-conjugating enzyme]-L-cysteine + [acceptor protein]-L-lysine = [E2 ubiquitin-conjugating enzyme]-L-cysteine + N(6)-ubiquitinyl-[acceptor protein]-L-lysine.. It participates in protein modification; protein ubiquitination. Its activity is regulated as follows. Activated by NDFIP1- and NDFIP2-binding. Functionally, E3 ubiquitin-protein ligase which accepts ubiquitin from an E2 ubiquitin-conjugating enzyme in the form of a thioester and then directly transfers the ubiquitin to targeted substrates. Interacts with SMAD7 to trigger SMAD7-mediated transforming growth factor beta/TGF-beta receptor ubiquitin-dependent degradation, thereby down-regulating TGF-beta signaling. In addition, interaction with SMAD7 activates autocatalytic degradation, which is prevented by interaction with AIMP1. Also forms a stable complex with TGF-beta receptor-mediated phosphorylated SMAD1, SMAD2 and SMAD3, and targets SMAD1 and SMAD2 for ubiquitination and proteasome-mediated degradation. SMAD2 may recruit substrates, such as SNON, for ubiquitin-dependent degradation. Negatively regulates TGFB1-induced epithelial-mesenchymal transition and myofibroblast differentiation. The polypeptide is E3 ubiquitin-protein ligase SMURF2 (Mus musculus (Mouse)).